The primary structure comprises 221 residues: Response regulator protein PmrA (221 aa).

The Response regulatory domain maps to 2–116 (RILLAEDDLL…ELQARVRALT (115 aa)). A 4-aspartylphosphate modification is found at aspartate 51. Residues 124–218 (LPQLVHGELR…VRGIGYGIDQ (95 aa)) constitute a DNA-binding region (ompR/PhoB-type).

The protein resides in the cytoplasm. Member of the two-component regulatory system PmrA/PmrB that plays a role in the regulation of resistance towards polymyxin B and cationic antimicrobial peptides in response to limiting concentrations of Mg(2+). Functions as a transcriptional activator by direct binding to a cis-acting sequence upstream of the target gene promoters including lipase lipA and pmrH promoters. Also autoregulates its own pmrAB operon under Mg(2+)-limiting conditions. In Pseudomonas aeruginosa (strain ATCC 15692 / DSM 22644 / CIP 104116 / JCM 14847 / LMG 12228 / 1C / PRS 101 / PAO1), this protein is Response regulator protein PmrA (pmrA).